We begin with the raw amino-acid sequence, 310 residues long: Phytoene synthase 2, chloroplastic (310 aa).

Residues 1-25 constitute a chloroplast transit peptide; sequence DPDIVLPGNLGLLSEAYDRCGEVCA.

It belongs to the phytoene/squalene synthase family. As to quaternary structure, monomer.

Its subcellular location is the plastid. The protein localises to the chloroplast. It carries out the reaction 2 (2E,6E,10E)-geranylgeranyl diphosphate = 15-cis-phytoene + 2 diphosphate. It participates in carotenoid biosynthesis; phytoene biosynthesis; all-trans-phytoene from geranylgeranyl diphosphate: step 1/1. In terms of biological role, catalyzes the reaction from prephytoene diphosphate to phytoene. The chain is Phytoene synthase 2, chloroplastic (PSY2) from Solanum lycopersicum (Tomato).